Consider the following 257-residue polypeptide: Transcription factor bHLH55 (257 aa).

Residues 74–126 (NKRAKHKELERQRRQENTSLFKILRYLLPSQYIKGKRSSADHVLEAVNYIKDL) enclose the bHLH domain.

As to quaternary structure, homodimer. In terms of tissue distribution, expressed in roots, leaves, stems, and flowers.

The protein resides in the nucleus. The protein is Transcription factor bHLH55 (BHLH55) of Arabidopsis thaliana (Mouse-ear cress).